A 395-amino-acid polypeptide reads, in one-letter code: MSRHFFTSESVSEGHPDKIADQISDAVLDAIIAKDKHARVACETMVKTGVAIISGEVSTNAWVDLEKLTRNVISDIGYTSSDVGFDGATCGIMNLIGQQSPEIAQGVDRSNPEEQGAGDQGLMFGYATNETPTLMPAPLYYSHRLVERQAEARKSGVLPWLRPDAKSQVTFIYEDNKPVAIDTVVLSTQHNPDIKQEDLVSAVMENIINHVLPAELLTEDTKYHINPTGRFVIGGPVGDCGLTGRKIIVDTYGGMARHGGGAFSGKDPSKVDRSAAYAGRYVAKNIVAAGLADRCEIQISYAIGVAEPTSISIDTFGTGSISEERLVEIVREHFDLRPYGITKMLDLLHPMYQQTAAYGHFGREPFEMTVGDDTFTAFSWEKTDKADDLRKAAGL.

His-15 is a binding site for ATP. Asp-17 lines the Mg(2+) pocket. K(+) is bound at residue Glu-43. 2 residues coordinate L-methionine: Glu-56 and Gln-99. The flexible loop stretch occupies residues Gln-99 to Arg-109. ATP contacts are provided by residues Asp-164–Lys-166, Arg-230–Phe-231, Asp-239, Arg-245–Lys-246, Ala-262, and Lys-266. Asp-239 contributes to the L-methionine binding site. Lys-270 is a binding site for L-methionine.

This sequence belongs to the AdoMet synthase family. As to quaternary structure, homotetramer; dimer of dimers. It depends on Mg(2+) as a cofactor. K(+) is required as a cofactor.

It is found in the cytoplasm. It carries out the reaction L-methionine + ATP + H2O = S-adenosyl-L-methionine + phosphate + diphosphate. Its pathway is amino-acid biosynthesis; S-adenosyl-L-methionine biosynthesis; S-adenosyl-L-methionine from L-methionine: step 1/1. In terms of biological role, catalyzes the formation of S-adenosylmethionine (AdoMet) from methionine and ATP. The overall synthetic reaction is composed of two sequential steps, AdoMet formation and the subsequent tripolyphosphate hydrolysis which occurs prior to release of AdoMet from the enzyme. This Colwellia psychrerythraea (strain 34H / ATCC BAA-681) (Vibrio psychroerythus) protein is S-adenosylmethionine synthase.